A 107-amino-acid polypeptide reads, in one-letter code: L-rhamnose mutarotase (107 aa).

Tyrosine 21 provides a ligand contact to substrate. The active-site Proton donor is the histidine 25. Substrate-binding positions include tyrosine 44 and 79 to 80; that span reads WW.

Belongs to the rhamnose mutarotase family. As to quaternary structure, homodimer.

Its subcellular location is the cytoplasm. It carries out the reaction alpha-L-rhamnose = beta-L-rhamnose. The protein operates within carbohydrate metabolism; L-rhamnose metabolism. In terms of biological role, involved in the anomeric conversion of L-rhamnose. The sequence is that of L-rhamnose mutarotase from Agrobacterium fabrum (strain C58 / ATCC 33970) (Agrobacterium tumefaciens (strain C58)).